An 82-amino-acid chain; its full sequence is MILNLFISKKQYTASLAKKRLKTLIKKKKKFFYQSSYLPQLKNDLLLVIAKYIKIQPNKMSIQIEKRKKNLLILEINITNVK.

Belongs to the MinE family.

Functionally, prevents the cell division inhibition by proteins MinC and MinD at internal division sites while permitting inhibition at polar sites. This ensures cell division at the proper site by restricting the formation of a division septum at the midpoint of the long axis of the cell. This is Cell division topological specificity factor from Buchnera aphidicola subsp. Cinara cedri (strain Cc).